Consider the following 98-residue polypeptide: SPbeta prophage-derived uncharacterized protein YorB (98 aa).

This is SPbeta prophage-derived uncharacterized protein YorB (yorB) from Bacillus subtilis (strain 168).